Here is a 262-residue protein sequence, read N- to C-terminus: MKNIHQTAVVEDGARIGEDVKIEAYAFVSKDAVLGDNVTIKQGARVIGNTQIGDNSKIFSYAIVGDIPQDISYHDEENTGVIIGKNATIREFCTINSGTHKGDGLTRIGENAFIMAYCHIAHDCLIGNNIILANNATLAGHVELGDYAVVGGLTPIHQFVKVGESCMIAGASALSQDVVPFCLAEGNRAYIRSLNLVGIRRRFEKEQVEELVKAYKFLFNQGVSLKDQAGELFEKTNDTNVKKMCKFILETTRGIPLAKGRD.

This sequence belongs to the transferase hexapeptide repeat family. LpxA subfamily. In terms of assembly, homotrimer.

It localises to the cytoplasm. The catalysed reaction is a (3R)-hydroxyacyl-[ACP] + UDP-N-acetyl-alpha-D-glucosamine = a UDP-3-O-[(3R)-3-hydroxyacyl]-N-acetyl-alpha-D-glucosamine + holo-[ACP]. The protein operates within glycolipid biosynthesis; lipid IV(A) biosynthesis; lipid IV(A) from (3R)-3-hydroxytetradecanoyl-[acyl-carrier-protein] and UDP-N-acetyl-alpha-D-glucosamine: step 1/6. Functionally, involved in the biosynthesis of lipid A, a phosphorylated glycolipid that anchors the lipopolysaccharide to the outer membrane of the cell. This Campylobacter curvus (strain 525.92) protein is Acyl-[acyl-carrier-protein]--UDP-N-acetylglucosamine O-acyltransferase.